We begin with the raw amino-acid sequence, 561 residues long: Dihydroxy-acid dehydratase (561 aa).

C50 lines the [2Fe-2S] cluster pocket. D82 serves as a coordination point for Mg(2+). Residue C123 participates in [2Fe-2S] cluster binding. D124 and K125 together coordinate Mg(2+). K125 bears the N6-carboxylysine mark. C195 serves as a coordination point for [2Fe-2S] cluster. Residue E447 participates in Mg(2+) binding. S473 serves as the catalytic Proton acceptor.

The protein belongs to the IlvD/Edd family. As to quaternary structure, homodimer. Requires [2Fe-2S] cluster as cofactor. It depends on Mg(2+) as a cofactor.

It carries out the reaction (2R)-2,3-dihydroxy-3-methylbutanoate = 3-methyl-2-oxobutanoate + H2O. The catalysed reaction is (2R,3R)-2,3-dihydroxy-3-methylpentanoate = (S)-3-methyl-2-oxopentanoate + H2O. It functions in the pathway amino-acid biosynthesis; L-isoleucine biosynthesis; L-isoleucine from 2-oxobutanoate: step 3/4. It participates in amino-acid biosynthesis; L-valine biosynthesis; L-valine from pyruvate: step 3/4. Its function is as follows. Functions in the biosynthesis of branched-chain amino acids. Catalyzes the dehydration of (2R,3R)-2,3-dihydroxy-3-methylpentanoate (2,3-dihydroxy-3-methylvalerate) into 2-oxo-3-methylpentanoate (2-oxo-3-methylvalerate) and of (2R)-2,3-dihydroxy-3-methylbutanoate (2,3-dihydroxyisovalerate) into 2-oxo-3-methylbutanoate (2-oxoisovalerate), the penultimate precursor to L-isoleucine and L-valine, respectively. The chain is Dihydroxy-acid dehydratase from Chloroflexus aurantiacus (strain ATCC 29366 / DSM 635 / J-10-fl).